Reading from the N-terminus, the 283-residue chain is NFU1 iron-sulfur cluster scaffold homolog, mitochondrial (283 aa).

The N-terminal 65 residues, 1-65 (MSKFLSQAAI…ELRMPVACRR (65 aa)), are a transit peptide targeting the mitochondrion. The interval 182–250 (IKELLDTRIR…IPEVESVEQV (69 aa)) is nifU. The [4Fe-4S] cluster site is built by cysteine 219 and cysteine 222.

It belongs to the NifU family.

It is found in the mitochondrion. Functionally, molecular scaffold for [Fe-S] cluster assembly of mitochondrial iron-sulfur proteins. The sequence is that of NFU1 iron-sulfur cluster scaffold homolog, mitochondrial from Drosophila sechellia (Fruit fly).